Reading from the N-terminus, the 860-residue chain is MKSSEIRQAFLNYFVQRGHQIVASSSLVPSNDPTLLFTNAGMVQFKDLFLGLETRSYQRAATAQRCVRAGGKHNDLENVGYTARHHTFFEMLGNFSFGDYFKREAIQYAWEFLTEVLHIPAERLWVTVYKEDLEAEDIWLKEMKVSPERFSRCGEKDNFWSMGDTGPCGPCTEIFYDHGPEVAGGPPGSPDEDGDRYIEIWNLVFMQFNRDREGHLHPLPKPSVDTGMGLERLAAVIQGVHSNYEIDSFQYLIKAIAQLGQDIDLNHTSLKVIADHIRSCSFLIVDGVLPSNEGRGYVLRRIIRRAVRHGNKLGLPSPFFSKLVQPLIDVMGDAYPELINSKAHIERILQQEENQFTRTLEQGLRLLQDHIKNLQGQELSGEVAFKLYDTYGFPIDLTADIIREQGLHIDMEAFNQLMQQQREQSQAASQFTTDYHAVSQLDHQSEFHGYEKESMEAKIIGLLQEGNEVKSINKGAKGAVILDHTPFYAESGGQVGDKGLLIGKEFTFQVDDTQKVGQAVVHYGKVIKGELTLDLLIHAQVDNIRRDAIRLNHTATHLLHAALKKIVGQHVQQRGSLVDAERARFDFSHFEALTPQQIQQIEEVVNAQIRANNEVITQVMDIESAKQSGAVALFGEKYSDAVRVLSMGDFSKELCGGTHARRTGDIGLFKIVAEYGIASGIRRIEMVTGRYALAWVNEQLGFMNNLAATLKTTPNSLQEKVSQLLLDNKNQEKMIAKLLSEKAQKSGADILGEIEEIKGINLLIKQLEGMDSQTMRHTMDQLKSRIDSAVIILFTIEQNKMNVIAGVSKNIIGKAPSAAQLVRHLCGKGGGRDDMAQGGGGVPEDLNSKIKEIKEMIEKI.

Residues histidine 553, histidine 557, cysteine 655, and histidine 659 each contribute to the Zn(2+) site.

Belongs to the class-II aminoacyl-tRNA synthetase family. Zn(2+) serves as cofactor.

The protein localises to the cytoplasm. The catalysed reaction is tRNA(Ala) + L-alanine + ATP = L-alanyl-tRNA(Ala) + AMP + diphosphate. Catalyzes the attachment of alanine to tRNA(Ala) in a two-step reaction: alanine is first activated by ATP to form Ala-AMP and then transferred to the acceptor end of tRNA(Ala). Also edits incorrectly charged Ser-tRNA(Ala) and Gly-tRNA(Ala) via its editing domain. This is Alanine--tRNA ligase from Legionella pneumophila (strain Corby).